A 207-amino-acid chain; its full sequence is dTTP/UTP pyrophosphatase (207 aa).

Asp79 acts as the Proton acceptor in catalysis.

The protein belongs to the Maf family. YhdE subfamily. The cofactor is a divalent metal cation.

It is found in the cytoplasm. It carries out the reaction dTTP + H2O = dTMP + diphosphate + H(+). It catalyses the reaction UTP + H2O = UMP + diphosphate + H(+). Its function is as follows. Nucleoside triphosphate pyrophosphatase that hydrolyzes dTTP and UTP. May have a dual role in cell division arrest and in preventing the incorporation of modified nucleotides into cellular nucleic acids. This chain is dTTP/UTP pyrophosphatase, found in Rhodopseudomonas palustris (strain BisB5).